The primary structure comprises 122 residues: Cysteine proteinase inhibitor 5 (122 aa).

The signal sequence occupies residues 1–26 (MTSKVVFLLLLSLVVVLLPLYASAAA). Residues 29–117 (GGWSPISNVT…RNLTSFEPAN (89 aa)) enclose the Cystatin domain. Residue Asn-36 is glycosylated (N-linked (GlcNAc...) asparagine). Positions 72-76 (QVVSG) match the Secondary area of contact motif. N-linked (GlcNAc...) asparagine glycosylation occurs at Asn-109.

This sequence belongs to the cystatin family. Phytocystatin subfamily.

It is found in the secreted. Specific inhibitor of cysteine proteinases. Probably involved in the regulation of endogenous processes and in defense against pests and pathogens. The polypeptide is Cysteine proteinase inhibitor 5 (CYS5) (Arabidopsis thaliana (Mouse-ear cress)).